A 1024-amino-acid polypeptide reads, in one-letter code: Beta-galactosidase (1024 aa).

2 residues coordinate substrate: N103 and D202. A Na(+)-binding site is contributed by D202. Residues E417, H419, and E462 each contribute to the Mg(2+) site. Residues E462 and 538–541 (EYAH) each bind substrate. The active-site Proton donor is E462. Residue E538 is the Nucleophile of the active site. Mg(2+) is bound at residue N598. 2 residues coordinate Na(+): F602 and N605. Substrate is bound by residues N605 and W1000.

This sequence belongs to the glycosyl hydrolase 2 family. Homotetramer. It depends on Mg(2+) as a cofactor. The cofactor is Na(+).

It carries out the reaction Hydrolysis of terminal non-reducing beta-D-galactose residues in beta-D-galactosides.. The chain is Beta-galactosidase from Escherichia coli (strain ATCC 8739 / DSM 1576 / NBRC 3972 / NCIMB 8545 / WDCM 00012 / Crooks).